Reading from the N-terminus, the 716-residue chain is Fatty acid oxidation complex subunit alpha (716 aa).

The enoyl-CoA hydratase/isomerase stretch occupies residues 1 to 189 (MIYQSPTIQV…KVGAIDAVVA (189 aa)). Aspartate 296 contributes to the substrate binding site. The segment at 311-716 (KNIDTAAVLG…AANNGSYYQS (406 aa)) is 3-hydroxyacyl-CoA dehydrogenase. Residues methionine 324, aspartate 343, 400-402 (VVE), lysine 407, and serine 429 each bind NAD(+). Catalysis depends on histidine 450, which acts as the For 3-hydroxyacyl-CoA dehydrogenase activity. Asparagine 453 provides a ligand contact to NAD(+). Asparagine 500 lines the substrate pocket.

It in the N-terminal section; belongs to the enoyl-CoA hydratase/isomerase family. This sequence in the C-terminal section; belongs to the 3-hydroxyacyl-CoA dehydrogenase family. As to quaternary structure, heterotetramer of two alpha chains (FadB) and two beta chains (FadA).

The catalysed reaction is a (3S)-3-hydroxyacyl-CoA + NAD(+) = a 3-oxoacyl-CoA + NADH + H(+). It catalyses the reaction a (3S)-3-hydroxyacyl-CoA = a (2E)-enoyl-CoA + H2O. The enzyme catalyses a 4-saturated-(3S)-3-hydroxyacyl-CoA = a (3E)-enoyl-CoA + H2O. It carries out the reaction (3S)-3-hydroxybutanoyl-CoA = (3R)-3-hydroxybutanoyl-CoA. The catalysed reaction is a (3Z)-enoyl-CoA = a 4-saturated (2E)-enoyl-CoA. It catalyses the reaction a (3E)-enoyl-CoA = a 4-saturated (2E)-enoyl-CoA. The protein operates within lipid metabolism; fatty acid beta-oxidation. Functionally, involved in the aerobic and anaerobic degradation of long-chain fatty acids via beta-oxidation cycle. Catalyzes the formation of 3-oxoacyl-CoA from enoyl-CoA via L-3-hydroxyacyl-CoA. It can also use D-3-hydroxyacyl-CoA and cis-3-enoyl-CoA as substrate. This is Fatty acid oxidation complex subunit alpha from Shewanella sediminis (strain HAW-EB3).